The chain runs to 1314 residues: Enfumafungin synthase efuA (1314 aa).

The tract at residues 1–680 (MPSYHNTDKT…RYIDKASRQG (680 aa)) is terpenne cyclase. PFTB repeat units lie at residues 19-62 (LQQA…ELSL) and 66-107 (GPEI…RILG). 3 helical membrane passes run 133-153 (FFTR…IPQM), 155-175 (AELI…SSWA), and 230-250 (YQWI…FGGL). The stretch at 260 to 300 (LKRCTAWLLEHQEESGDWAGFFPPIHGSIWALLLDGFSFQS) is one PFTB 3 repeat. Asp395 serves as the catalytic Proton donor. PFTB repeat units follow at residues 417–458 (VMNG…DSLV) and 546–597 (CMRT…LRFR). The tract at residues 681–1314 (IETLRIPSSS…ADSVLDIEEK (634 aa)) is glycosyltransferase. Residues 1200–1220 (AIVQLLYGFTTTILALFGWLK) form a helical membrane-spanning segment. The tract at residues 1289–1314 (DSGASESSRSSLDGGHADSVLDIEEK) is disordered. The segment covering 1292–1302 (ASESSRSSLDG) has biased composition (low complexity).

The protein in the N-terminal section; belongs to the terpene cyclase/mutase family. In the C-terminal section; belongs to the glycosyltransferase 28 family.

It is found in the membrane. It participates in secondary metabolite biosynthesis; terpenoid biosynthesis. Terpene cyclase-glycosyl transferase fusion protein; part of the gene cluster that mediates the biosynthesis of enfumafungin, a glycosylated fernene-type triterpenoid with potent antifungal activity, mediated by its interaction with beta-1,3-glucan synthase and the fungal cell wall. The pathway begins with the terpene cyclase-glycosyl transferase fusion protein that most likely uses 2,3-oxidosqualene as substrate and catalyzes glycosylation immediately after cyclization. The fernene glycoside then could be processed by the desaturase efuI which catalyzes isomerization of a double bond established by efuA to form the core structure. The latter would then undergo a series of hydroxylations in unknown order at C-2, C-19, C-23 and C-25, which would be catalyzed by two of the three cytochrome P450 monooxygenases efuB, efuG or efuH. The hydroxy-group at C-25 becomes oxidized by the dehydrogenase efuE to enable a spontaneous, non-enzymatic hemiacetal formation with C-23. After hydroxylation at C-2, acetylation by the acetyltransferase efuC takes place. The final steps in enfumafungin biosynthesis require expansion of the 5-membered ring by lactonization via a Baeyer-Villiger reaction mediated by one of the BGC's cytochrome P450 monooxygenases (efuB, efuG or efuH) followed by ring cleavage. This type of reaction would establish a double bond between C-20 and C-21 which could be reduced by the reductase efuL to form the final product. The chain is Enfumafungin synthase efuA from Hormonema carpetanum.